A 211-amino-acid chain; its full sequence is Large ribosomal subunit protein uL4 (211 aa).

The tract at residues 63–94 (RFGRQKGGGTARHGARSAPQFVGGGKAHGPRV) is disordered.

It belongs to the universal ribosomal protein uL4 family. Part of the 50S ribosomal subunit.

Its function is as follows. One of the primary rRNA binding proteins, this protein initially binds near the 5'-end of the 23S rRNA. It is important during the early stages of 50S assembly. It makes multiple contacts with different domains of the 23S rRNA in the assembled 50S subunit and ribosome. Functionally, forms part of the polypeptide exit tunnel. The polypeptide is Large ribosomal subunit protein uL4 (Maricaulis maris (strain MCS10) (Caulobacter maris)).